Reading from the N-terminus, the 171-residue chain is 3-hydroxydecanoyl-[acyl-carrier-protein] dehydratase (171 aa).

His-70 is an active-site residue.

This sequence belongs to the thioester dehydratase family. FabA subfamily. In terms of assembly, homodimer.

Its subcellular location is the cytoplasm. It catalyses the reaction a (3R)-hydroxyacyl-[ACP] = a (2E)-enoyl-[ACP] + H2O. The enzyme catalyses (3R)-hydroxydecanoyl-[ACP] = (2E)-decenoyl-[ACP] + H2O. It carries out the reaction (2E)-decenoyl-[ACP] = (3Z)-decenoyl-[ACP]. It participates in lipid metabolism; fatty acid biosynthesis. Necessary for the introduction of cis unsaturation into fatty acids. Catalyzes the dehydration of (3R)-3-hydroxydecanoyl-ACP to E-(2)-decenoyl-ACP and then its isomerization to Z-(3)-decenoyl-ACP. Can catalyze the dehydratase reaction for beta-hydroxyacyl-ACPs with saturated chain lengths up to 16:0, being most active on intermediate chain length. In Methylococcus capsulatus (strain ATCC 33009 / NCIMB 11132 / Bath), this protein is 3-hydroxydecanoyl-[acyl-carrier-protein] dehydratase.